The chain runs to 951 residues: Serine/threonine-protein kinase 10 (951 aa).

Residues 36-294 form the Protein kinase domain; the sequence is WEIIGELGDG…AAQLLEHPFV (259 aa). ATP-binding positions include 42–50 and Lys65; that span reads LGDGAFGKV. Asp157 acts as the Proton acceptor in catalysis. Acidic residues predominate over residues 319 to 330; the sequence is EENGEVEEEEAS. Residues 319-479 form a disordered region; it reads EENGEVEEEE…DSGSNSASES (161 aa). Over residues 331–343 the composition is skewed to polar residues; that stretch reads DTPSSNKSVSQSA. Residues 345–356 are compositionally biased toward basic and acidic residues; it reads GEKDKHTGKEHV. Polar residues predominate over residues 364–373; that stretch reads PQNTDSQADI. 2 stretches are compositionally biased toward basic and acidic residues: residues 374–394 and 410–427; these read HSQK…HDAV and HEPK…EEHG. Positions 429–443 are enriched in polar residues; that stretch reads AVSSNQRPKSSQSDR. Phosphoserine; by PLK1 occurs at positions 483, 487, and 491. Residues 583–723 adopt a coiled-coil conformation; sequence EQEMNSKRKF…NKKQQLLRDR (141 aa). Basic and acidic residues predominate over residues 785 to 800; sequence QERARLPKNQKAEAKT. Positions 785 to 804 are disordered; sequence QERARLPKNQKAEAKTRMTM. A coiled-coil region spans residues 898–928; sequence RENLRPRKKALEDELEHKKEEQEMFFRMNEE. The interval 930-951 is disordered; it reads AGHPFPSNKPAKFYSFSSPEAS.

It belongs to the protein kinase superfamily. STE Ser/Thr protein kinase family. STE20 subfamily. In terms of assembly, homodimer. Autophosphorylates. Phosphorylated by plk1/plx1, suggesting the existence of a feedback loop with plk1/plx1. activation of the protein.

It localises to the cell membrane. The enzyme catalyses L-seryl-[protein] + ATP = O-phospho-L-seryl-[protein] + ADP + H(+). It catalyses the reaction L-threonyl-[protein] + ATP = O-phospho-L-threonyl-[protein] + ADP + H(+). May act as a polo kinase kinase by mediating phosphorylation of plk1/plx1 and subsequent activation of plk1/plx1 during oocyte maturation. This Xenopus tropicalis (Western clawed frog) protein is Serine/threonine-protein kinase 10 (stk10).